Here is a 678-residue protein sequence, read N- to C-terminus: Protein MALE DISCOVERER 2 (678 aa).

A signal peptide spans 1-25 (MMGCGFHFPWFFFLIIGLQAPLSLS). Over 26–323 (LTSQGSALLK…SKGSKHVWLY (298 aa)) the chain is Extracellular. N52 carries an N-linked (GlcNAc...) asparagine glycan. LRR repeat units lie at residues 71–94 (KVQILDLSGYSLEGTLAPELSQLS), 95–117 (DLRSLILSRNHFSGGIPKEYGSF), 119–141 (NLEVLDLRENDLSGQIPPELSNG), and 143–164 (SLKHLLLSGNKFSDDMRIKIVR). The interval 247-314 (LAAEPAPSAP…KNQPQDNKQS (68 aa)) is disordered. Over residues 296-311 (KGSTSPDISKNQPQDN) the composition is skewed to polar residues. Residues 324–344 (VVIAVASFVGLLIIVAVIFFC) form a helical membrane-spanning segment. The Cytoplasmic portion of the chain corresponds to 345 to 678 (RKRAVKSIGP…ELEILSSEAT (334 aa)). The Protein kinase domain occupies 346–651 (KRAVKSIGPW…DVAEQLKQVI (306 aa)).

Belongs to the protein kinase superfamily. Ser/Thr protein kinase family. Expressed in pollen tubes and seedlings.

It localises to the endomembrane system. The enzyme catalyses L-seryl-[protein] + ATP = O-phospho-L-seryl-[protein] + ADP + H(+). It carries out the reaction L-threonyl-[protein] + ATP = O-phospho-L-threonyl-[protein] + ADP + H(+). Its function is as follows. Involved in the pollen tube perception of the female signal by binding an unidentified female attractant. May be involved in the regulation of root hairs development. This is Protein MALE DISCOVERER 2 (MDIS2) from Arabidopsis thaliana (Mouse-ear cress).